The sequence spans 210 residues: Proteasome subunit beta (210 aa).

A propeptide spans 1–9 (MIHDKVFKG) (removed in mature form; by autocatalysis). T10 functions as the Nucleophile in the catalytic mechanism.

This sequence belongs to the peptidase T1B family. The 20S proteasome core is composed of 14 alpha and 14 beta subunits that assemble into four stacked heptameric rings, resulting in a barrel-shaped structure. The two inner rings, each composed of seven catalytic beta subunits, are sandwiched by two outer rings, each composed of seven alpha subunits. The catalytic chamber with the active sites is on the inside of the barrel. Has a gated structure, the ends of the cylinder being occluded by the N-termini of the alpha-subunits. Is capped at one or both ends by the proteasome regulatory ATPase, PAN.

It is found in the cytoplasm. The catalysed reaction is Cleavage of peptide bonds with very broad specificity.. With respect to regulation, the formation of the proteasomal ATPase PAN-20S proteasome complex, via the docking of the C-termini of PAN into the intersubunit pockets in the alpha-rings, triggers opening of the gate for substrate entry. Interconversion between the open-gate and close-gate conformations leads to a dynamic regulation of the 20S proteasome proteolysis activity. Component of the proteasome core, a large protease complex with broad specificity involved in protein degradation. This chain is Proteasome subunit beta, found in Ferroglobus placidus (strain DSM 10642 / AEDII12DO).